A 920-amino-acid polypeptide reads, in one-letter code: Isoleucine--tRNA ligase (920 aa).

Positions 58 to 68 (PYANGHLHLGH) match the 'HIGH' region motif. Glutamate 569 is a binding site for L-isoleucyl-5'-AMP. The 'KMSKS' region signature appears at 610 to 614 (KMSKS). Lysine 613 lines the ATP pocket. Residues cysteine 895, cysteine 898, cysteine 910, and cysteine 913 each coordinate Zn(2+).

Belongs to the class-I aminoacyl-tRNA synthetase family. IleS type 1 subfamily. Monomer. Zn(2+) is required as a cofactor.

The protein resides in the cytoplasm. It carries out the reaction tRNA(Ile) + L-isoleucine + ATP = L-isoleucyl-tRNA(Ile) + AMP + diphosphate. Functionally, catalyzes the attachment of isoleucine to tRNA(Ile). As IleRS can inadvertently accommodate and process structurally similar amino acids such as valine, to avoid such errors it has two additional distinct tRNA(Ile)-dependent editing activities. One activity is designated as 'pretransfer' editing and involves the hydrolysis of activated Val-AMP. The other activity is designated 'posttransfer' editing and involves deacylation of mischarged Val-tRNA(Ile). The sequence is that of Isoleucine--tRNA ligase from Helicobacter pylori (strain ATCC 700392 / 26695) (Campylobacter pylori).